The primary structure comprises 275 residues: Ribosomal RNA small subunit methyltransferase A (275 aa).

S-adenosyl-L-methionine contacts are provided by Asn-21, Leu-23, Gly-48, Glu-69, Asp-94, and Asn-115.

The protein belongs to the class I-like SAM-binding methyltransferase superfamily. rRNA adenine N(6)-methyltransferase family. RsmA subfamily.

It localises to the cytoplasm. The enzyme catalyses adenosine(1518)/adenosine(1519) in 16S rRNA + 4 S-adenosyl-L-methionine = N(6)-dimethyladenosine(1518)/N(6)-dimethyladenosine(1519) in 16S rRNA + 4 S-adenosyl-L-homocysteine + 4 H(+). Functionally, specifically dimethylates two adjacent adenosines (A1518 and A1519) in the loop of a conserved hairpin near the 3'-end of 16S rRNA in the 30S particle. May play a critical role in biogenesis of 30S subunits. This Clostridium botulinum (strain Langeland / NCTC 10281 / Type F) protein is Ribosomal RNA small subunit methyltransferase A.